The sequence spans 283 residues: Large ribosomal subunit protein uL2 (283 aa).

2 disordered regions span residues 1–59 (MSIK…GGHK) and 222–283 (RGVA…TGGQ).

This sequence belongs to the universal ribosomal protein uL2 family. In terms of assembly, part of the 50S ribosomal subunit. Forms a bridge to the 30S subunit in the 70S ribosome.

Its function is as follows. One of the primary rRNA binding proteins. Required for association of the 30S and 50S subunits to form the 70S ribosome, for tRNA binding and peptide bond formation. It has been suggested to have peptidyltransferase activity; this is somewhat controversial. Makes several contacts with the 16S rRNA in the 70S ribosome. The chain is Large ribosomal subunit protein uL2 from Salinibacter ruber (strain DSM 13855 / M31).